Consider the following 606-residue polypeptide: NADH-ubiquinone oxidoreductase chain 5 (606 aa).

A run of 16 helical transmembrane segments spans residues 4 to 24 (FSSLTLVTLILLTMPIAAINF), 43 to 63 (AFITSMIPTMMFIHTGQEMII), 84 to 104 (FFSMMFVPVALFVTWSIMEFS), 114 to 134 (INQFFKYLLLFLITMLILVTA), 140 to 160 (LFIGWEGVGIMSFLLIGWWYG), 171 to 191 (AILYNRIGDIGFILAMAWFLI), 213 to 233 (LMGLILAATGKSAQFGLHPWL), 241 to 261 (TPVSALLHSSTMVVAGIFLLI), 272 to 292 (FGQSIMLCLGAMTTLFTAMCA), 301 to 320 (IIAFSTSSQLGLMMVTIGIN), 325 to 347 (AFLHICTHAFFKAMLFMCSGSII), 366 to 386 (MPFTTTALIIGSLALTGMPFL), 413 to 433 (LVATSFTAIYSTRIIFFALLG), 457 to 477 (LLIGSLFAGFIISNNIPPMTI), 485 to 505 (YLKMTALTVTILGFILALEIS), and 582 to 602 (GLIKLYFLSFLITILISTTLL).

It belongs to the complex I subunit 5 family. Core subunit of respiratory chain NADH dehydrogenase (Complex I) which is composed of 45 different subunits.

It localises to the mitochondrion inner membrane. It catalyses the reaction a ubiquinone + NADH + 5 H(+)(in) = a ubiquinol + NAD(+) + 4 H(+)(out). Its function is as follows. Core subunit of the mitochondrial membrane respiratory chain NADH dehydrogenase (Complex I) which catalyzes electron transfer from NADH through the respiratory chain, using ubiquinone as an electron acceptor. Essential for the catalytic activity and assembly of complex I. The chain is NADH-ubiquinone oxidoreductase chain 5 (MT-ND5) from Ovis aries (Sheep).